The following is a 158-amino-acid chain: Urease accessory protein UreE (158 aa).

This sequence belongs to the UreE family.

Its subcellular location is the cytoplasm. Involved in urease metallocenter assembly. Binds nickel. Probably functions as a nickel donor during metallocenter assembly. This Corynebacterium urealyticum (strain ATCC 43042 / DSM 7109) protein is Urease accessory protein UreE.